The primary structure comprises 167 residues: Epithelial membrane protein 2 (167 aa).

Residues 1-21 (MLVLLAFIIVFHITSAALLLV) form a helical membrane-spanning segment. Asn44, Asn47, and Asn52 each carry an N-linked (GlcNAc...) asparagine glycan. The next 3 membrane-spanning stretches (helical) occupy residues 67–87 (TMIL…LQLF), 95–115 (FVLT…AASI), and 143–163 (FILA…YLIL).

It belongs to the PMP-22/EMP/MP20 family. As to quaternary structure, interacts with PTK2; regulates PTK2 activation and localization. Interacts with ITGB3; regulates the levels of the heterodimer ITGA5-ITGB3 integrin surface expression. Interacts with P2RX7 (via C-terminus). Interacts with ITGB1; the interaction may be direct or indirect and ITGB1 has a heterodimer form.

The protein resides in the golgi apparatus membrane. Its subcellular location is the cell membrane. It is found in the apical cell membrane. It localises to the membrane raft. The protein localises to the cytoplasm. The protein resides in the nucleus. Its subcellular location is the perinuclear region. Functions as a key regulator of cell membrane composition by regulating protein surface expression. Also, plays a role in regulation of processes including cell migration, cell proliferation, cell contraction and cell adhesion. Regulates transepithelial migration of neutrophils into the alveolar lumen, potentially via mediation of cell surface expression of adhesion markers and lipid raft formation. Negatively regulates caveolae formation by reducing CAV1 expression and CAV1 amount by increasing lysosomal degradation. Facilitates surface trafficking and the formation of lipid rafts bearing GPI-anchor proteins. Regulates surface expression of MHC1 and ICAM1 proteins increasing susceptibility to T-cell mediated cytotoxicity. Regulates the plasma membrane expression of the integrin heterodimers ITGA6-ITGB1, ITGA5-ITGB3 and ITGA5-ITGB1 resulting in modulation of cell-matrix adhesion. Also regulates many processes through PTK2. Regulates blood vessel endothelial cell migration and angiogenesis by regulating VEGF protein expression through PTK2 activation. Regulates cell migration and cell contraction through PTK2 and SRC activation. Regulates focal adhesion density, F-actin conformation and cell adhesion capacity through interaction with PTK2. Positively regulates cell proliferation. Plays a role during cell death and cell blebbing. Promotes angiogenesis and vasculogenesis through induction of VEGFA via a HIF1A-dependent pathway. Also plays a role in embryo implantation by regulating surface trafficking of integrin heterodimer ITGA5-ITGB3. Plays a role in placental angiogenesis and uterine natural killer cell regulation at the maternal-fetal placental interface, however not required in the maternal tissues for a viable pregnancy. Involved in the early stages of embryogenic development and cardiogenesis, potentially via regulation of epithelial-mesenchymal transition timing. May play a role in glomerular filtration. In Bos taurus (Bovine), this protein is Epithelial membrane protein 2 (EMP2).